The chain runs to 480 residues: Reticulophagy regulator 1 (480 aa).

The segment covering 1–10 has biased composition (basic and acidic residues); that stretch reads MASPAPEEHA. The tract at residues 1-41 is disordered; the sequence is MASPAPEEHATQGCPATEEQEPRPGVPGEEAGPEGAGPQVE. The Cytoplasmic portion of the chain corresponds to 1 to 43; the sequence is MASPAPEEHATQGCPATEEQEPRPGVPGEEAGPEGAGPQVEEA. A helical membrane pass occupies residues 44 to 64; that stretch reads AGRVAAALTWLLGEPVLWLGW. At 65–78 the chain is on the lumenal side; it reads RADELLSWKRPLRS. Residues 67–216 form a reticulon homology domain region; the sequence is DELLSWKRPL…LLFAFLCPLF (150 aa). The chain crosses the membrane as a helical span at residues 79–99; that stretch reads LLAFLGANLLFWFLALTPWRV. Residues 100-101 are Cytoplasmic-facing; sequence YH. Residues 102–122 form a helical membrane-spanning segment; that stretch reads LISVMILGRVIMQIIKDMVLS. At 123-191 the chain is on the lumenal side; it reads RARGAQLWRS…LVCSVCTFFT (69 aa). A Phosphoserine modification is found at serine 132. Position 134 is a phosphoserine; by CAMK2B (serine 134). Serine 136 bears the Phosphoserine mark. The chain crosses the membrane as a helical span at residues 192–212; sequence ILGSYIPGVILSYLLLLFAFL. At 213–480 the chain is on the cytoplasmic side; the sequence is CPLFKCNDIG…GFLSNLLGGH (268 aa). A compositionally biased stretch (polar residues) spans 302-313; it reads FNLSEGYTPQTD. The segment at 302-348 is disordered; it reads FNLSEGYTPQTDTSDDLDRPSEEVFSRDLSDFPSLENGAGTNDEDEL. Over residues 317–331 the composition is skewed to basic and acidic residues; sequence DLDRPSEEVFSRDLS. The short motif at 436–441 is the LIR motif element; the sequence is DDFELL. Residues 450–480 are disordered; it reads ESELGLTQDQGAEAQQSKKSSGFLSNLLGGH. Positions 454-473 are enriched in polar residues; that stretch reads GLTQDQGAEAQQSKKSSGFL.

The protein belongs to the RETREG family. As to quaternary structure, homooligomer; oligomerization is enhanced following endoplasmic reticulum stress and is mediated by the reticulon homology domain. Interacts with ATG8 family modifier proteins MAP1LC3A, MAP1LC3B, GABARAP, GABARAPL1 and GABARAPL2. In terms of processing, phosphorylation at Ser-134 by CAMK2B enhances oligomerization and membrane scission and reticulophagy activity.

The protein resides in the golgi apparatus. Its subcellular location is the cis-Golgi network membrane. The protein localises to the endoplasmic reticulum membrane. Functionally, endoplasmic reticulum (ER)-anchored autophagy regulator which mediates ER delivery into lysosomes through sequestration into autophagosomes. Promotes membrane remodeling and ER scission via its membrane bending capacity and targets the fragments into autophagosomes via interaction with ATG8 family proteins. Active under basal conditions. Required for collagen quality control in a LIR motif-dependent manner. Required for long-term survival of nociceptive and autonomic ganglion neurons. The protein is Reticulophagy regulator 1 of Rattus norvegicus (Rat).